A 217-amino-acid chain; its full sequence is Probable D-methionine transport system permease protein MetI (217 aa).

Positions 13–207 (TLETLYMGFI…LIVMLSQKLG (195 aa)) constitute an ABC transmembrane type-1 domain. The next 5 membrane-spanning stretches (helical) occupy residues 20–40 (GFIA…LAFL), 58–78 (VIIN…LLPF), 81–101 (LVVG…VSAI), 143–163 (IPIL…YSAM), and 184–204 (NMIY…MLSQ).

The protein belongs to the binding-protein-dependent transport system permease family. CysTW subfamily.

Its subcellular location is the cell inner membrane. Its function is as follows. Part of the binding-protein-dependent transport system for D-methionine. Probably responsible for the translocation of the substrate across the membrane. The chain is Probable D-methionine transport system permease protein MetI (metI) from Pasteurella multocida (strain Pm70).